Consider the following 492-residue polypeptide: Cytochrome P450 2B12 (492 aa).

S129 bears the Phosphoserine mark. C437 contacts heme.

Belongs to the cytochrome P450 family. Heme is required as a cofactor. As to expression, preputial gland, but not in liver.

It localises to the endoplasmic reticulum membrane. The protein resides in the microsome membrane. The catalysed reaction is an organic molecule + reduced [NADPH--hemoprotein reductase] + O2 = an alcohol + oxidized [NADPH--hemoprotein reductase] + H2O + H(+). Its function is as follows. Cytochromes P450 are a group of heme-thiolate monooxygenases. In liver microsomes, this enzyme is involved in an NADPH-dependent electron transport pathway. This isozyme seems responsible for metabolism of 2,2',4,4',5,5'-hexachlorobiphenyl. The sequence is that of Cytochrome P450 2B12 (Cyp2b12) from Rattus norvegicus (Rat).